The sequence spans 62 residues: Large ribosomal subunit protein uL29 (62 aa).

It belongs to the universal ribosomal protein uL29 family.

This chain is Large ribosomal subunit protein uL29, found in Cytophaga hutchinsonii (strain ATCC 33406 / DSM 1761 / CIP 103989 / NBRC 15051 / NCIMB 9469 / D465).